Here is a 72-residue protein sequence, read N- to C-terminus: Translation initiation factor IF-1 (72 aa).

The S1-like domain maps to 1–72; it reads MSKEDMIEFS…TKGRITFRFK (72 aa).

This sequence belongs to the IF-1 family. As to quaternary structure, component of the 30S ribosomal translation pre-initiation complex which assembles on the 30S ribosome in the order IF-2 and IF-3, IF-1 and N-formylmethionyl-tRNA(fMet); mRNA recruitment can occur at any time during PIC assembly.

The protein resides in the cytoplasm. One of the essential components for the initiation of protein synthesis. Stabilizes the binding of IF-2 and IF-3 on the 30S subunit to which N-formylmethionyl-tRNA(fMet) subsequently binds. Helps modulate mRNA selection, yielding the 30S pre-initiation complex (PIC). Upon addition of the 50S ribosomal subunit IF-1, IF-2 and IF-3 are released leaving the mature 70S translation initiation complex. This chain is Translation initiation factor IF-1, found in Acidiphilium cryptum (strain JF-5).